Reading from the N-terminus, the 356-residue chain is Biotin synthase (356 aa).

The Radical SAM core domain maps to 51 to 270; sequence NKVQCNQLLN…IALARIMMPL (220 aa). Residues Cys66, Cys70, and Cys73 each coordinate [4Fe-4S] cluster. [2Fe-2S] cluster contacts are provided by Cys110, Cys141, Cys201, and Arg274. A disordered region spans residues 310 to 356; sequence PGDNKDRSLFDRLGLEPRDDHGVHEHSSHSHTHDQGHDHGPHGHSHG. Positions 312–350 are enriched in basic and acidic residues; the sequence is DNKDRSLFDRLGLEPRDDHGVHEHSSHSHTHDQGHDHGP.

This sequence belongs to the radical SAM superfamily. Biotin synthase family. As to quaternary structure, homodimer. [4Fe-4S] cluster is required as a cofactor. It depends on [2Fe-2S] cluster as a cofactor.

It carries out the reaction (4R,5S)-dethiobiotin + (sulfur carrier)-SH + 2 reduced [2Fe-2S]-[ferredoxin] + 2 S-adenosyl-L-methionine = (sulfur carrier)-H + biotin + 2 5'-deoxyadenosine + 2 L-methionine + 2 oxidized [2Fe-2S]-[ferredoxin]. Its pathway is cofactor biosynthesis; biotin biosynthesis; biotin from 7,8-diaminononanoate: step 2/2. Catalyzes the conversion of dethiobiotin (DTB) to biotin by the insertion of a sulfur atom into dethiobiotin via a radical-based mechanism. The protein is Biotin synthase of Rhodopseudomonas palustris (strain BisB18).